The primary structure comprises 206 residues: MSKLKQGTFITFEGGEGIGKSTQCQMLYEYLKSQNIPVILTREVGGTNVAEKMREILVHTDLLPMSELLQAMAARYDHMVKKIIPALQAGNIVICDRFIDSTACYQGLELENGIELVYNLHKDLMPPLMPDLTFFIDVESSIAIERVNSRNMSNKFDVRGLDFYNKIYDCFKGLSKKFPERIVTIKASDLNPEQVHELIKKHLNLI.

Position 14–21 (14–21 (GGEGIGKS)) interacts with ATP.

This sequence belongs to the thymidylate kinase family.

The catalysed reaction is dTMP + ATP = dTDP + ADP. Its function is as follows. Phosphorylation of dTMP to form dTDP in both de novo and salvage pathways of dTTP synthesis. The sequence is that of Thymidylate kinase from Rickettsia bellii (strain RML369-C).